A 266-amino-acid chain; its full sequence is Non-structural maintenance of chromosomes element 1 homolog (266 aa).

The segment at 1-102 (MQGNTRRTGV…SVSKMASDFA (102 aa)) is interaction with NSMCE3. An RING-type; atypical zinc finger spans residues 191–232 (CNICRSLLIQGQSCETCGIRMHLPCVAKYFQSSSEPHCPHCN). Positions 243–252 (FDPEKERETG) are enriched in basic and acidic residues. A disordered region spans residues 243 to 266 (FDPEKERETGMSRSNKRPSRSRQH). The segment covering 256–266 (SNKRPSRSRQH) has biased composition (basic residues).

This sequence belongs to the NSE1 family. Component of the SMC5-SMC6 complex which consists at least of SMC5, SMC6, NSMCE2, NSMCE1, NSMCE4A or EID3 and NSMCE3. NSMCE1, NSMCE4A or EID3 and NSMCE3 probably form a subcomplex that bridges the head domains of the SMC5-SMC6 heterodimer. Interacts with NSMCE3. In terms of processing, ubiquitinated.

It is found in the nucleus. The protein resides in the chromosome. It localises to the telomere. It catalyses the reaction S-ubiquitinyl-[E2 ubiquitin-conjugating enzyme]-L-cysteine + [acceptor protein]-L-lysine = [E2 ubiquitin-conjugating enzyme]-L-cysteine + N(6)-ubiquitinyl-[acceptor protein]-L-lysine.. RING-type zinc finger-containing E3 ubiquitin ligase that assembles with melanoma antigen protein (MAGE) to catalyze the direct transfer of ubiquitin from E2 ubiquitin-conjugating enzyme to a specific substrate. Within MAGE-RING ubiquitin ligase complex, MAGE stimulates and specifies ubiquitin ligase activity likely through recruitment and/or stabilization of the E2 ubiquitin-conjugating enzyme at the E3:substrate complex. Involved in maintenance of genome integrity, DNA damage response and DNA repair. NSMCE3/MAGEG1 and NSMCE1 ubiquitin ligase are components of SMC5-SMC6 complex and may positively regulate homologous recombination-mediated DNA repair. The protein is Non-structural maintenance of chromosomes element 1 homolog (NSMCE1) of Bos taurus (Bovine).